The primary structure comprises 166 residues: uncharacterized protein (166 aa).

This is an uncharacterized protein from Invertebrate iridescent virus 6 (IIV-6).